Here is a 162-residue protein sequence, read N- to C-terminus: Transcription elongation factor GreA (162 aa).

A coiled-coil region spans residues 44–72 (ENAEYHAAKEKQSHIERRIAELSDILSRA).

The protein belongs to the GreA/GreB family.

Its function is as follows. Necessary for efficient RNA polymerase transcription elongation past template-encoded arresting sites. The arresting sites in DNA have the property of trapping a certain fraction of elongating RNA polymerases that pass through, resulting in locked ternary complexes. Cleavage of the nascent transcript by cleavage factors such as GreA or GreB allows the resumption of elongation from the new 3'terminus. GreA releases sequences of 2 to 3 nucleotides. The protein is Transcription elongation factor GreA of Nautilia profundicola (strain ATCC BAA-1463 / DSM 18972 / AmH).